The primary structure comprises 700 residues: DNA ligase 2 (700 aa).

NAD(+) contacts are provided by residues 42-46 (DDAYD) and 89-90 (SL). The active-site N6-AMP-lysine intermediate is the Lys122. NAD(+) contacts are provided by Arg143, Glu177, Lys303, and Lys327. Residues Cys421, Cys424, Cys437, and Cys443 each contribute to the Zn(2+) site. The segment at 590 to 621 (MTEPGATPPRPADTDGADGATAEAPGDGGPLA) is disordered. The region spanning 615–700 (GDGGPLAGMK…FAVLVAGLLS (86 aa)) is the BRCT domain.

The protein belongs to the NAD-dependent DNA ligase family. LigA subfamily. It depends on Mg(2+) as a cofactor. Mn(2+) serves as cofactor.

It carries out the reaction NAD(+) + (deoxyribonucleotide)n-3'-hydroxyl + 5'-phospho-(deoxyribonucleotide)m = (deoxyribonucleotide)n+m + AMP + beta-nicotinamide D-nucleotide.. Its function is as follows. DNA ligase that catalyzes the formation of phosphodiester linkages between 5'-phosphoryl and 3'-hydroxyl groups in double-stranded DNA using NAD as a coenzyme and as the energy source for the reaction. It is essential for DNA replication and repair of damaged DNA. The sequence is that of DNA ligase 2 from Streptomyces coelicolor (strain ATCC BAA-471 / A3(2) / M145).